The following is a 978-amino-acid chain: Calsyntenin-1 (978 aa).

The signal sequence occupies residues Met-1 to Thr-26. The Extracellular segment spans residues Ser-27–His-876. Cadherin domains are found at residues Gln-37–Phe-143 and Leu-144–Arg-249. An N-linked (GlcNAc...) asparagine glycan is attached at Asn-53. 4 N-linked (GlcNAc...) asparagine glycosylation sites follow: Asn-304, Asn-486, Asn-608, and Asn-823. The chain crosses the membrane as a helical span at residues Val-877–Ile-897. Over Ala-898–Gln-978 the chain is Cytoplasmic. The tract at residues Ala-937–Leu-958 is disordered. A compositionally biased stretch (acidic residues) spans Glu-948 to Ala-957.

This sequence belongs to the calsyntenin family.

The protein localises to the postsynaptic cell membrane. Functionally, postsynaptic adhesion molecule that binds to presynaptic neurexins to mediate both excitatory and inhibitory synapse formation. Promotes synapse development by acting as a cell adhesion molecule at the postsynaptic membrane, which associates with neurexin-alpha at the presynaptic membrane. The polypeptide is Calsyntenin-1 (Cals) (Drosophila melanogaster (Fruit fly)).